The following is a 565-amino-acid chain: Dihydroxy-acid dehydratase (565 aa).

C53 is a binding site for [2Fe-2S] cluster. Residue D85 coordinates Mg(2+). C126 is a [2Fe-2S] cluster binding site. Mg(2+)-binding residues include D127 and K128. N6-carboxylysine is present on K128. C198 is a binding site for [2Fe-2S] cluster. E450 contacts Mg(2+). The active-site Proton acceptor is S476.

The protein belongs to the IlvD/Edd family. As to quaternary structure, homodimer. It depends on [2Fe-2S] cluster as a cofactor. Mg(2+) is required as a cofactor.

It catalyses the reaction (2R)-2,3-dihydroxy-3-methylbutanoate = 3-methyl-2-oxobutanoate + H2O. The enzyme catalyses (2R,3R)-2,3-dihydroxy-3-methylpentanoate = (S)-3-methyl-2-oxopentanoate + H2O. It participates in amino-acid biosynthesis; L-isoleucine biosynthesis; L-isoleucine from 2-oxobutanoate: step 3/4. Its pathway is amino-acid biosynthesis; L-valine biosynthesis; L-valine from pyruvate: step 3/4. Its function is as follows. Functions in the biosynthesis of branched-chain amino acids. Catalyzes the dehydration of (2R,3R)-2,3-dihydroxy-3-methylpentanoate (2,3-dihydroxy-3-methylvalerate) into 2-oxo-3-methylpentanoate (2-oxo-3-methylvalerate) and of (2R)-2,3-dihydroxy-3-methylbutanoate (2,3-dihydroxyisovalerate) into 2-oxo-3-methylbutanoate (2-oxoisovalerate), the penultimate precursor to L-isoleucine and L-valine, respectively. The chain is Dihydroxy-acid dehydratase from Synechococcus sp. (strain JA-2-3B'a(2-13)) (Cyanobacteria bacterium Yellowstone B-Prime).